Consider the following 508-residue polypeptide: Pyruvate kinase (508 aa).

Arg56 provides a ligand contact to substrate. Residues Asn58, Ser60, Asp90, and Thr91 each contribute to the K(+) site. Residue 58 to 61 (NFSH) participates in ATP binding. Residues Arg97 and Lys185 each coordinate ATP. A Mg(2+)-binding site is contributed by Glu251. Substrate-binding residues include Gly274, Asp275, and Thr307. Asp275 is a binding site for Mg(2+).

This sequence belongs to the pyruvate kinase family. In terms of assembly, homotetramer. It depends on Mg(2+) as a cofactor. Requires K(+) as cofactor.

The catalysed reaction is pyruvate + ATP = phosphoenolpyruvate + ADP + H(+). It functions in the pathway carbohydrate degradation; glycolysis; pyruvate from D-glyceraldehyde 3-phosphate: step 5/5. Regulated by phosphoenolpyruvate substrate and is allosterically activated by ribose-5-phosphate, AMP and other nucleoside monophosphates but not by fructose-1,6-bisphosphate. In Mycoplasma pneumoniae (strain ATCC 29342 / M129 / Subtype 1) (Mycoplasmoides pneumoniae), this protein is Pyruvate kinase (pyk).